Consider the following 196-residue polypeptide: MSAIKITNVAVLHNPAPFVSPFQFEISYECLNSLKDDLEWKLIYVGSAEDETYDQLLESVLVGPVNVGNYRFVFQADPPDPSKIQEEDIIGVTVLLLTCSYMGQEFLRVGYYVNNDYEDEQLKEEPPTKVLIDKVQRNILSDKPRVTKFPIDFHPEEEQTAATAAPPEQSDEQQPNVNGEAQVLPDQSVEPKPEES.

Basic and acidic residues predominate over residues 146–157 (VTKFPIDFHPEE). Residues 146 to 196 (VTKFPIDFHPEEEQTAATAAPPEQSDEQQPNVNGEAQVLPDQSVEPKPEES) are disordered.

This sequence belongs to the ASF1 family. Interacts with histone H3 and histone H4. Component of the HIRA complex made of UBN1, UBN2, ASF1A, CABIN1 and HIRA. Interacts with HIRA. In terms of tissue distribution, expressed in leaves and flower buds.

The protein localises to the nucleus. Its subcellular location is the nucleolus. In terms of biological role, histone chaperone that facilitates histone deposition and histone exchange and removal during nucleosome assembly and disassembly. While encoded by a region of the Arabidopsis thaliana genome that is homologous to the Brassica S-locus for self incompatibility, this protein may not play the same role in Arabidopsis thaliana. The protein is Probable histone chaperone ASF1A (ASF1A) of Arabidopsis thaliana (Mouse-ear cress).